Reading from the N-terminus, the 123-residue chain is Large ribosomal subunit protein uL14c (123 aa).

It belongs to the universal ribosomal protein uL14 family. In terms of assembly, part of the 50S ribosomal subunit.

The protein localises to the plastid. It localises to the chloroplast. Its function is as follows. Binds to 23S rRNA. The sequence is that of Large ribosomal subunit protein uL14c from Oryza nivara (Indian wild rice).